Reading from the N-terminus, the 109-residue chain is Thioredoxin (109 aa).

The 108-residue stretch at 2 to 109 (TNCIVELTDG…LKDFLNLYLK (108 aa)) folds into the Thioredoxin domain. A disulfide bridge links Cys33 with Cys36.

It belongs to the thioredoxin family.

Functionally, participates in various redox reactions through the reversible oxidation of its active center dithiol to a disulfide and catalyzes dithiol-disulfide exchange reactions. This is Thioredoxin (trxA) from Buchnera aphidicola subsp. Baizongia pistaciae (strain Bp).